Reading from the N-terminus, the 346-residue chain is uncharacterized protein (346 aa).

Residues 322–346 (GRDGGYRETTSPPTGRGRNVRGSHA) form a disordered region.

This is an uncharacterized protein from Mycobacterium tuberculosis (strain CDC 1551 / Oshkosh).